Here is a 585-residue protein sequence, read N- to C-terminus: Nucleus accumbens-associated protein 2 (585 aa).

The BTB domain maps to 30 to 94 (CDVSIVVKGQ…CYTGKLTMAA (65 aa)). Residues Lys-171 and Lys-215 each participate in a glycyl lysine isopeptide (Lys-Gly) (interchain with G-Cter in SUMO2) cross-link. The segment covering 238–261 (PYPQGERTSPGASSLPTTDSSTSY) has biased composition (polar residues). Positions 238–269 (PYPQGERTSPGASSLPTTDSSTSYHNEDEDDD) are disordered. Glycyl lysine isopeptide (Lys-Gly) (interchain with G-Cter in SUMO2) cross-links involve residues Lys-296, Lys-426, and Lys-453. The BEN domain maps to 348–445 (GSGVYITRGQ…DMCTNARRVR (98 aa)). The interval 541–585 (APEQLPADGQSSPQAFEQGNTSSSRPQTPVATATRRPEGTYAGTL) is disordered. The segment covering 549–571 (GQSSPQAFEQGNTSSSRPQTPVA) has biased composition (polar residues).

In terms of assembly, homooligomer; mediated by the BTB domain. Interacts with the NuRD complex. Interacts (via C-terminal part) with HDAC2. Interacts (via BTB domain) with MTA1, MTA2 and MTA3.

It is found in the nucleus. Functions as a transcriptional repressor through its association with the NuRD complex. Recruits the NuRD complex to the promoter of MDM2, leading to the repression of MDM2 transcription and subsequent stability of p53/TP53. The polypeptide is Nucleus accumbens-associated protein 2 (Nacc2) (Rattus norvegicus (Rat)).